Reading from the N-terminus, the 86-residue chain is UPF0367 protein PMN2A_1492 (86 aa).

Belongs to the UPF0367 family.

The protein is UPF0367 protein PMN2A_1492 of Prochlorococcus marinus (strain NATL2A).